A 457-amino-acid polypeptide reads, in one-letter code: Cysteine desulfurase (457 aa).

Pyridoxal 5'-phosphate-binding residues include Ala127, Thr128, Gln235, Ser255, and His257. Position 258 is an N6-(pyridoxal phosphate)lysine (Lys258). Thr295 contacts pyridoxal 5'-phosphate. Cys381 acts as the Cysteine persulfide intermediate in catalysis. Residue Cys381 participates in [2Fe-2S] cluster binding. Cys381 is a binding site for Zn(2+). Cysteine persulfide is present on Cys381.

This sequence belongs to the class-V pyridoxal-phosphate-dependent aminotransferase family. NifS/IscS subfamily. In terms of assembly, homodimer. Component of the mitochondrial core iron-sulfur cluster (ISC) complex composed of NFS1, LYRM4, NDUFAB1, ISCU, FXN, and FDX2; this complex is a heterohexamer containing two copies of each monomer. Component of cyteine desulfurase complex composed of NFS1, LYRM4 and NDUFAB1; this complex contributes to the activation of cysteine desulfurase activity and NFS1 stabilization. Interacts (homodimer form) with ISCU (D-state); each monomer interacts with the C-terminal regions of each NFS1 monomer. Interacts with HSPA9. Interacts (via homodimer form) with FDX2. Interacts (via homodimer form) with FXN. Interacts with LYRM4. Component of a complex composed of FXN, NFS1, LYRM4 and ISCU. Monomer. Homodimer. Oligomer. Interacts with ISCU. Component of the cysteine desulfurase complex composed of NFS1 and LYRM4; this complex contributes to the activation of cysteine desulfurase activity. Interacts with MOCS3. Pyridoxal 5'-phosphate serves as cofactor. N-gluconoylated. Post-translationally, cysteine persulfide intermediate is reduced by thiol-containing molecules like glutathione and L-cysteine. Persulfide reduction is a rate-limiting step of cysteine desulfurase catalytic cycle. Predominantly expressed in heart and skeletal muscle. Also found in brain, liver and pancreas.

It is found in the mitochondrion. The protein resides in the cytoplasm. It localises to the nucleus. Its subcellular location is the cytoskeleton. The protein localises to the microtubule organizing center. It is found in the centrosome. The catalysed reaction is (sulfur carrier)-H + L-cysteine = (sulfur carrier)-SH + L-alanine. It carries out the reaction L-cysteinyl-[cysteine desulfurase] + L-cysteine = S-sulfanyl-L-cysteinyl-[cysteine desulfurase] + L-alanine. Active only in complex with LYRM4. Its function is as follows. Cysteine desulfurase, of the core iron-sulfur cluster (ISC) assembly complex, that catalyzes the desulfuration of L-cysteine to L-alanine, as component of the cysteine desulfurase complex, leading to the formation of a cysteine persulfide intermediate at the active site cysteine residue and participates in the [2Fe-2S] clusters assembly on the scaffolding protein ISCU. The persulfide is then transferred on the flexible Cys loop from the catalytic site of NFS1 to the surface of NFS1. After the NFS1-linked persulfide sulfur is transferred to one of the conserved Cys residues of the scaffold, a reaction assisted by FXN. The core iron-sulfur cluster (ISC) assembly complex is involved in the de novo synthesis of a [2Fe-2S] cluster, the first step of the mitochondrial iron-sulfur protein biogenesis. This process is initiated by the cysteine desulfurase complex (NFS1:LYRM4:NDUFAB1) that produces persulfide which is delivered on the scaffold protein ISCU in a FXN-dependent manner. Then this complex is stabilized by FDX2 which provides reducing equivalents to accomplish the [2Fe-2S] cluster assembly. Finally, the [2Fe-2S] cluster is transferred from ISCU to chaperone proteins, including HSCB, HSPA9 and GLRX5. May catalyze the desulfuration of L-cysteine to L-alanine as component of the cysteine desulfurase complex (NFS1:LYRM4), leading to the formation of a cysteine persulfide intermediate. Acts as a sulfur donor for MOCS3 by transferring the sulfur of the cysteine persulfide intermediate on MOCS3. This Homo sapiens (Human) protein is Cysteine desulfurase.